Here is a 145-residue protein sequence, read N- to C-terminus: Mitochondrial import receptor subunit TOM20 homolog (145 aa).

Residues 1–6 (MVGRNS) lie on the Mitochondrial intermembrane side of the membrane. Residues 7–24 (AIAAGVCGALFIGYCIYF) form a helical membrane-spanning segment. The Cytoplasmic segment spans residues 25-145 (DRKRRSDPNF…AQSLAEDDVE (121 aa)). Residues lysine 35, lysine 56, lysine 61, and lysine 68 each participate in a glycyl lysine isopeptide (Lys-Gly) (interchain with G-Cter in ubiquitin) cross-link. Phosphoserine is present on residues serine 135 and serine 138.

The protein belongs to the Tom20 family. As to quaternary structure, forms part of the preprotein translocase complex of the outer mitochondrial membrane (TOM complex) which consists of at least 7 different proteins (TOMM5, TOMM6, TOMM7, TOMM20, TOMM22, TOMM40 and TOMM70). Interacts with TOM22. Interacts with APEX1. Interacts with TBC1D21. Upon mitochondrial depolarization, interacts with PINK1; the interaction is required for PINK1-TOM-TIM23 supercomplex formation which is critical for PINK1 stabilization at the outer mitochondrial membrane, kinase activation and downstream mitophagy. Ubiquitinated by PRKN during mitophagy, leading to its degradation and enhancement of mitophagy. Deubiquitinated by USP30.

Its subcellular location is the mitochondrion outer membrane. Functionally, central component of the receptor complex responsible for the recognition and translocation of cytosolically synthesized mitochondrial preproteins. Together with TOM22 functions as the transit peptide receptor at the surface of the mitochondrion outer membrane and facilitates the movement of preproteins into the TOM40 translocation pore. Required for the translocation across the mitochondrial outer membrane of cytochrome P450 monooxygenases. In Bos taurus (Bovine), this protein is Mitochondrial import receptor subunit TOM20 homolog (TOMM20).